Here is a 160-residue protein sequence, read N- to C-terminus: Cytochrome b6-f complex subunit 4 (160 aa).

Helical transmembrane passes span 36–56 (LLYI…GLAV), 95–115 (LLGV…PFIE), and 131–151 (AVFL…TFPI).

The protein belongs to the cytochrome b family. PetD subfamily. In terms of assembly, the 4 large subunits of the cytochrome b6-f complex are cytochrome b6, subunit IV (17 kDa polypeptide, petD), cytochrome f and the Rieske protein, while the 4 small subunits are petG, petL, petM and petN. The complex functions as a dimer.

The protein resides in the plastid. The protein localises to the cyanelle thylakoid membrane. Functionally, component of the cytochrome b6-f complex, which mediates electron transfer between photosystem II (PSII) and photosystem I (PSI), cyclic electron flow around PSI, and state transitions. This Cyanophora paradoxa protein is Cytochrome b6-f complex subunit 4.